The chain runs to 696 residues: Catalase (696 aa).

Residues histidine 64 and asparagine 137 contribute to the active site. The interval 187–211 is disordered; the sequence is SLAQGSQISSERGSPKAYSNTEPNK. Positions 189–208 are enriched in polar residues; the sequence is AQGSQISSERGSPKAYSNTE. Heme is bound at residue tyrosine 353.

The protein belongs to the catalase family. It depends on heme as a cofactor.

It carries out the reaction 2 H2O2 = O2 + 2 H2O. Functionally, occurs in almost all aerobically respiring organisms and serves to protect cells from the toxic effects of hydrogen peroxide. This chain is Catalase, found in Penicillium janthinellum (Penicillium vitale).